We begin with the raw amino-acid sequence, 975 residues long: E3 ubiquitin-protein ligase BRE1A (975 aa).

Residues 1-30 are disordered; that stretch reads MSGIGNKRAAGEPGTSMPPEKKAAVEDSGT. N6-acetyllysine is present on Lys-21. At Ser-41 the chain carries Phosphoserine. Positions 43 to 90 form a coiled coil; sequence TEELDIRTLQTKNRKLAEMLDQRQAIEDELREHIEKLERRQATDDASL. The tract at residues 125–155 is disordered; sequence KALVVPEPEPDSDSNQERKDDRERGEGQEPA. Residues Ser-136 and Ser-138 each carry the phosphoserine modification. A compositionally biased stretch (basic and acidic residues) spans 139 to 151; the sequence is NQERKDDRERGEG. 2 coiled-coil regions span residues 168-375 and 429-898; these read EEME…EQVV and SLHK…TTKK. 2 positions are modified to N6-acetyllysine: Lys-348 and Lys-510. Positions 507-622 are disordered; the sequence is DLNKTRLRSG…GKHDDGRKKE (116 aa). Ser-522 carries the post-translational modification Phosphoserine. A compositionally biased stretch (basic and acidic residues) spans 527-540; that stretch reads EDPKDEPAELKPDS. Positions 543–552 are enriched in low complexity; the sequence is LSSQSSASKA. Residues 558–622 show a composition bias toward basic and acidic residues; sequence NEIKSKRDEE…GKHDDGRKKE (65 aa). A Phosphoserine modification is found at Ser-562. The segment at 922 to 961 adopts an RING-type zinc-finger fold; sequence CPCCNMRKKDAVLTKCFHVFCFECVKTRYDTRQRKCPKCN.

The protein belongs to the BRE1 family. Component of the RNF20/40 complex (also known as BRE1 complex) probably composed of 2 copies of RNF20/BRE1A and 2 copies of RNF40/BRE1B. Interacts with UBE2E1/UBCH6. Interacts with p53/TP53 and WAC. Interacts with PAF1; the interaction mediates the association of the PAF1 and RNF20/40 complexes which is a prerequsite for recruitment of UBE2A/B. Interacts with isoform 1 and isoform 2 of PA2G4. Interacts with FBXL19. As to quaternary structure, (Microbial infection) Interacts with human herpesvirus 8 (KSHV) protein RTA/ORF50; this interaction targets the SMC5-SMC6 complex for proteasomal degradation. As to expression, expressed in the normal brain and also in malignant gliomas (at protein level).

It is found in the nucleus. It catalyses the reaction S-ubiquitinyl-[E2 ubiquitin-conjugating enzyme]-L-cysteine + [acceptor protein]-L-lysine = [E2 ubiquitin-conjugating enzyme]-L-cysteine + N(6)-ubiquitinyl-[acceptor protein]-L-lysine.. It functions in the pathway protein modification; protein ubiquitination. Component of the RNF20/40 E3 ubiquitin-protein ligase complex that mediates monoubiquitination of 'Lys-120' of histone H2B (H2BK120ub1). H2BK120ub1 gives a specific tag for epigenetic transcriptional activation and is also prerequisite for histone H3 'Lys-4' and 'Lys-79' methylation (H3K4me and H3K79me, respectively). It thereby plays a central role inb histone code and gene regulation. The RNF20/40 complex forms a H2B ubiquitin ligase complex in cooperation with the E2 enzyme UBE2A or UBE2B; reports about the cooperation with UBE2E1/UBCH are contradictory. Required for transcriptional activation of Hox genes. Recruited to the MDM2 promoter, probably by being recruited by p53/TP53, and thereby acts as a transcriptional coactivator. Mediates the polyubiquitination of isoform 2 of PA2G4 in cancer cells leading to its proteasome-mediated degradation. In terms of biological role, (Microbial infection) Promotes the human herpesvirus 8 (KSHV) lytic cycle by inducing the expression of lytic viral genes including the latency switch gene RTA/ORF50. The chain is E3 ubiquitin-protein ligase BRE1A (RNF20) from Homo sapiens (Human).